Here is a 154-residue protein sequence, read N- to C-terminus: Myoglobin (154 aa).

The region spanning 2–148 (GLSDGEWQLV…FRNDMAAKYK (147 aa)) is the Globin domain. Phosphoserine is present on Ser-4. His-65 contributes to the nitrite binding site. His-65 serves as a coordination point for O2. The residue at position 68 (Thr-68) is a Phosphothreonine. His-94 contacts heme b.

This sequence belongs to the globin family. In terms of assembly, monomeric.

The protein localises to the cytoplasm. It is found in the sarcoplasm. It catalyses the reaction Fe(III)-heme b-[protein] + nitric oxide + H2O = Fe(II)-heme b-[protein] + nitrite + 2 H(+). The catalysed reaction is H2O2 + AH2 = A + 2 H2O. In terms of biological role, monomeric heme protein which primary function is to store oxygen and facilitate its diffusion within muscle tissues. Reversibly binds oxygen through a pentacoordinated heme iron and enables its timely and efficient release as needed during periods of heightened demand. Depending on the oxidative conditions of tissues and cells, and in addition to its ability to bind oxygen, it also has a nitrite reductase activity whereby it regulates the production of bioactive nitric oxide. Under stress conditions, like hypoxia and anoxia, it also protects cells against reactive oxygen species thanks to its pseudoperoxidase activity. The protein is Myoglobin (MB) of Ochotona princeps (Southern American pika).